Reading from the N-terminus, the 258-residue chain is UPF0246 protein HS_0482 (258 aa).

It belongs to the UPF0246 family.

This Histophilus somni (strain 129Pt) (Haemophilus somnus) protein is UPF0246 protein HS_0482.